The chain runs to 247 residues: Acidic 27 kDa endochitinase (247 aa).

A signal peptide spans 1–16; it reads MVLCCVFLLFLTGSFA. The Proton donor role is filled by Glu84. Residues Cys206 and Cys238 are joined by a disulfide bond.

This sequence belongs to the glycosyl hydrolase 19 family. Chitinase class II subfamily.

The protein resides in the secreted. It localises to the extracellular space. It carries out the reaction Random endo-hydrolysis of N-acetyl-beta-D-glucosaminide (1-&gt;4)-beta-linkages in chitin and chitodextrins.. In terms of biological role, defense against chitin-containing fungal pathogens. The protein is Acidic 27 kDa endochitinase (CHI17) of Solanum lycopersicum (Tomato).